The following is a 290-amino-acid chain: Zinc finger protein-like 1 homolog (290 aa).

The B box-type; degenerate zinc-finger motif lies at 1–43 (MGLCKCPKRQVTTQFCFEHRVNVCENCMVVNHTKCTVQSYIQW). An RING-type; atypical zinc finger spans residues 53 to 101 (CPLCGSPLDNEDCVRLICYHVFHWKCLNAKQQSLPANTAPGGHTCPTCS). Residues 156-168 (NGNTFASSMSQTR) are compositionally biased toward polar residues. The disordered stretch occupies residues 156–175 (NGNTFASSMSQTRSNERPES). A helical membrane pass occupies residues 249–269 (WFLVLGGCIGFVCIIYVLATL).

The protein belongs to the ZFPL1 family.

The protein localises to the membrane. The polypeptide is Zinc finger protein-like 1 homolog (Aedes aegypti (Yellowfever mosquito)).